We begin with the raw amino-acid sequence, 437 residues long: Aspartic proteinase CDR1 (437 aa).

The signal sequence occupies residues 1-25; that stretch reads MASLFSSVLLSLCLLSSLFLSNANA. Residues 26–73 constitute a propeptide, activation peptide; the sequence is KPKLGFTADLIHRDSPKSPFYNPMETSSQRLRNAIHRSVNRVFHFTEK. Residues 90 to 430 enclose the Peptidase A1 domain; that stretch reads YLMNVSIGTP…DTVSKTVSFK (341 aa). N-linked (GlcNAc...) asparagine glycosylation occurs at Asn-93. Catalysis depends on residues Asp-108 and Asp-319.

Belongs to the peptidase A1 family.

It is found in the secreted. Its subcellular location is the extracellular space. The protein resides in the apoplast. In terms of biological role, involved in salicylic acid-dependent inducible resistance responses. May release an endogenous peptide elicitor required for the activation of inducible resistance mechanisms. Possesses protease activity in vitro. In Arabidopsis thaliana (Mouse-ear cress), this protein is Aspartic proteinase CDR1 (CDR1).